Here is a 537-residue protein sequence, read N- to C-terminus: DEAD-box ATP-dependent RNA helicase 5 (537 aa).

The segment at 1–97 is disordered; sequence MAGQKQELPV…EDLGEGESEQ (97 aa). Positions 22–80 form a coiled coil; that stretch reads TNKKKKKSKKNKHTEENHEVEEVPQEVTNGVEEELSNKEKKKKRKREEKESEKNKKKDV. Positions 23-33 are enriched in basic residues; the sequence is NKKKKKSKKNK. Over residues 68 to 87 the composition is skewed to basic and acidic residues; it reads EEKESEKNKKKDVPEKKLEA. Positions 116-142 match the Q motif motif; it reads KTFAESNLPENVLDCCKTFEKPSPIQS. Residues 145–324 enclose the Helicase ATP-binding domain; that stretch reads WPFLLDGRDL…QEFMDPNPIK (180 aa). Residue 158 to 165 participates in ATP binding; sequence AKTGSGKT. The DEAD box motif lies at 272–275; the sequence is DEAD. Positions 349–500 constitute a Helicase C-terminal domain; the sequence is ARDQRLIALL…VVPADLLKFG (152 aa). Serine 533 bears the Phosphoserine mark.

The protein belongs to the DEAD box helicase family. DDX5/DBP2 subfamily.

It localises to the nucleus. Its subcellular location is the nucleolus. It carries out the reaction ATP + H2O = ADP + phosphate + H(+). ATP-dependent RNA helicase required for 60S ribosomal subunit synthesis. Involved in efficient pre-rRNA processing, predominantly at site A3, which is necessary for the normal formation of 25S and 5.8S rRNAs. This Arabidopsis thaliana (Mouse-ear cress) protein is DEAD-box ATP-dependent RNA helicase 5 (RH5).